We begin with the raw amino-acid sequence, 538 residues long: Fructooligosaccharide ABC transporter substrate-binding protein FusA (538 aa).

Residues 1 to 22 (MKFKTFSKSAVLLTASLAVLAA) form the signal peptide. Cysteine 23 carries N-palmitoyl cysteine lipidation. The S-diacylglycerol cysteine moiety is linked to residue cysteine 23. Glutamate 167 contributes to the substrate binding site. 6 residues coordinate Ca(2+): aspartate 215, asparagine 217, asparagine 219, glutamate 221, aspartate 223, and glutamate 224. Asparagine 235 lines the substrate pocket. Ca(2+) is bound by residues aspartate 263, phenylalanine 264, aspartate 267, and asparagine 268. Substrate-binding residues include tryptophan 314, asparagine 318, lysine 353, tryptophan 384, arginine 419, and glutamate 423.

This sequence belongs to the bacterial solute-binding protein 1 family. The complex is composed of two ATP-binding proteins (MsmK), two transmembrane proteins (FusB and FusC) and a solute-binding protein (FusA).

Its subcellular location is the cell membrane. Functionally, part of the ABC transporter complex FusABC-MsmK involved in short- and long-chain fructooligosaccharide (FOS) import. Required for the utilization of long-chain FOSs. Binds kestose, nystose, fructofuranosyl-nystose and inulin, but not sucrose. Has a preference for long-chain FOSs (tetrasaccharides and larger). In Streptococcus pneumoniae serotype 4 (strain ATCC BAA-334 / TIGR4), this protein is Fructooligosaccharide ABC transporter substrate-binding protein FusA.